Here is a 215-residue protein sequence, read N- to C-terminus: Probable septum site-determining protein MinC (215 aa).

Belongs to the MinC family. As to quaternary structure, interacts with MinD and FtsZ.

Functionally, cell division inhibitor that blocks the formation of polar Z ring septums. Rapidly oscillates between the poles of the cell to destabilize FtsZ filaments that have formed before they mature into polar Z rings. Prevents FtsZ polymerization. The chain is Probable septum site-determining protein MinC from Clostridium botulinum (strain Alaska E43 / Type E3).